The primary structure comprises 184 residues: Photosystem I assembly protein Ycf4 (184 aa).

2 helical membrane passes run 22–42 (FCWAVILFLGSLGFLLVGTSS) and 57–77 (ILFFPQGIVMSFYGIAGLFIS).

It belongs to the Ycf4 family.

The protein localises to the plastid. It localises to the chloroplast thylakoid membrane. In terms of biological role, seems to be required for the assembly of the photosystem I complex. This chain is Photosystem I assembly protein Ycf4, found in Panax ginseng (Korean ginseng).